Reading from the N-terminus, the 293-residue chain is GTPase Era (293 aa).

One can recognise an Era-type G domain in the interval 2–168 (KILFSTIIGR…INEIKKYSYE (167 aa)). The segment at 10-17 (GRPNVGKS) is G1. 10–17 (GRPNVGKS) lines the GTP pocket. A G2 region spans residues 36-40 (QATRD). Positions 57 to 60 (DTPG) are G3. GTP contacts are provided by residues 57-61 (DTPGI) and 118-121 (TKID). Residues 118-121 (TKID) are G4. The tract at residues 147 to 149 (ISS) is G5. A KH type-2 domain is found at 199 to 279 (LEQELPHSIL…KLFLKIKVKK (81 aa)).

It belongs to the TRAFAC class TrmE-Era-EngA-EngB-Septin-like GTPase superfamily. Era GTPase family. As to quaternary structure, monomer.

Its subcellular location is the cytoplasm. It localises to the cell membrane. Its function is as follows. An essential GTPase that binds both GDP and GTP, with rapid nucleotide exchange. Plays a role in 16S rRNA processing and 30S ribosomal subunit biogenesis and possibly also in cell cycle regulation and energy metabolism. This Mycoplasmopsis pulmonis (strain UAB CTIP) (Mycoplasma pulmonis) protein is GTPase Era.